A 255-amino-acid chain; its full sequence is 5'-nucleotidase SurE (255 aa).

Residues D8, D9, S40, and N93 each coordinate a divalent metal cation.

The protein belongs to the SurE nucleotidase family. It depends on a divalent metal cation as a cofactor.

It localises to the cytoplasm. It carries out the reaction a ribonucleoside 5'-phosphate + H2O = a ribonucleoside + phosphate. Functionally, nucleotidase that shows phosphatase activity on nucleoside 5'-monophosphates. The polypeptide is 5'-nucleotidase SurE (Rhodopseudomonas palustris (strain BisA53)).